We begin with the raw amino-acid sequence, 546 residues long: Tyrosine-protein kinase yes (546 aa).

Residues 1–18 (MGCVKSKEDKGPTQKYRP) are compositionally biased toward basic and acidic residues. Positions 1-58 (MGCVKSKEDKGPTQKYRPDPTNPTPGSHMGLYGPDPTQMGQSPALKGPTNNYNSRSSG) are disordered. Gly2 carries N-myristoyl glycine lipidation. A lipid anchor (S-palmitoyl cysteine; in membrane form) is attached at Cys3. Positions 48-58 (PTNNYNSRSSG) are enriched in polar residues. Positions 94–155 (GGVTFFVALY…PSNYVAPADS (62 aa)) constitute an SH3 domain. One can recognise an SH2 domain in the interval 161–258 (WYFGKMGRKD…GLCYRLTTVC (98 aa)). The region spanning 280–533 (LRLELKLGQG…YIQSFLEDYF (254 aa)) is the Protein kinase domain. ATP contacts are provided by residues 286-294 (LGQGCFGEV) and Lys308. The active-site Proton acceptor is the Asp399. Tyr429 is subject to Phosphotyrosine; by autocatalysis. Tyr540 carries the post-translational modification Phosphotyrosine; by CSK.

Belongs to the protein kinase superfamily. Tyr protein kinase family. SRC subfamily. Post-translationally, autophosphorylation at Tyr-429 maintains enzyme activity. Palmitoylation at Cys-3 promotes membrane localization. In terms of tissue distribution, widely expressed.

The protein resides in the cell membrane. The protein localises to the cytoplasm. It is found in the cytoskeleton. Its subcellular location is the microtubule organizing center. It localises to the centrosome. The protein resides in the cytosol. The protein localises to the cell junction. It carries out the reaction L-tyrosyl-[protein] + ATP = O-phospho-L-tyrosyl-[protein] + ADP + H(+). Functionally, non-receptor protein tyrosine kinase that is involved in the regulation of cell growth and survival, apoptosis, cell-cell adhesion, cytoskeleton remodeling, differentiation, G2/M progression and cytokinesis. Required for convergent extension cell movements during gastrulation, acting with fyna via rhoa. May be required for epiboly to occur, possibly through its effects in calcium signaling. During embryonic development, phosphorylates ptk2.1/fak. In Danio rerio (Zebrafish), this protein is Tyrosine-protein kinase yes (yes1).